Reading from the N-terminus, the 425-residue chain is Serine hydroxymethyltransferase 2 (425 aa).

(6S)-5,6,7,8-tetrahydrofolate-binding positions include L121 and 125-127 (GHL). At K230 the chain carries N6-(pyridoxal phosphate)lysine.

This sequence belongs to the SHMT family. In terms of assembly, homodimer. It depends on pyridoxal 5'-phosphate as a cofactor.

It is found in the cytoplasm. It catalyses the reaction (6R)-5,10-methylene-5,6,7,8-tetrahydrofolate + glycine + H2O = (6S)-5,6,7,8-tetrahydrofolate + L-serine. Its pathway is one-carbon metabolism; tetrahydrofolate interconversion. It functions in the pathway amino-acid biosynthesis; glycine biosynthesis; glycine from L-serine: step 1/1. Functionally, catalyzes the reversible interconversion of serine and glycine with tetrahydrofolate (THF) serving as the one-carbon carrier. This reaction serves as the major source of one-carbon groups required for the biosynthesis of purines, thymidylate, methionine, and other important biomolecules. Also exhibits THF-independent aldolase activity toward beta-hydroxyamino acids, producing glycine and aldehydes, via a retro-aldol mechanism. This Mycobacterium tuberculosis (strain CDC 1551 / Oshkosh) protein is Serine hydroxymethyltransferase 2.